Reading from the N-terminus, the 420-residue chain is 3-oxoacyl-[acyl-carrier-protein] synthase 2 (420 aa).

In terms of domain architecture, Ketosynthase family 3 (KS3) spans 13–419; sequence FPNVVVTGIA…GHNVAIAFGC (407 aa). Catalysis depends on for beta-ketoacyl synthase activity residues cysteine 173, histidine 314, and histidine 349.

This sequence belongs to the thiolase-like superfamily. Beta-ketoacyl-ACP synthases family.

Its subcellular location is the cytoplasm. The enzyme catalyses an ultra-long-chain di-unsaturated fatty acyl-[ACP] + malonyl-[ACP] + H(+) = a 3-oxo-ultra-long-chain di-unsaturated fatty acyl-[ACP] + holo-[ACP] + CO2. It functions in the pathway lipid metabolism; mycolic acid biosynthesis. Part of the mycobacterial fatty acid elongation system FAS-II, which is involved in mycolic acid biosynthesis. Catalyzes the elongation of long chain acyl-ACP substrates by the addition of two carbons from malonyl-ACP to an acyl acceptor. Involved in extension of the mycolate chains to full lengths and produces longer chain multiunsaturated hydrocarbons averaging 54 carbons in length. The protein is 3-oxoacyl-[acyl-carrier-protein] synthase 2 (kasB) of Mycobacterium leprae (strain TN).